The chain runs to 190 residues: B3 domain-containing protein At1g49475 (190 aa).

The disordered stretch occupies residues 1-27; it reads MRNMHTNRRSPGPITSAATQRRLKPEP. The segment at residues 33–125 is a DNA-binding region (TF-B3); it reads KFIKIILLSR…CFRVVIFDVS (93 aa).

It is found in the nucleus. The sequence is that of B3 domain-containing protein At1g49475 from Arabidopsis thaliana (Mouse-ear cress).